The chain runs to 472 residues: Transmembrane protein 8B (472 aa).

The interval 1-36 is disordered; sequence MNMPQSLGNQPLPPEPPSLGTPAEGPGTTSPPEHCW. Over 1-233 the chain is Extracellular; that stretch reads MNMPQSLGNQ…ADALTYGFQL (233 aa). 2 N-linked (GlcNAc...) asparagine glycosylation sites follow: N92 and N100. Residues 182 to 221 enclose the EGF-like domain; the sequence is FLSPCVDDCGPYGQCKLLRTHNYLYAACECKAGWRGWGCT. 3 disulfides stabilise this stretch: C186/C196, C190/C209, and C211/C220. Residues 234–254 traverse the membrane as a helical segment; sequence LSTLLLCLSNLMFLPPVVLAI. The Cytoplasmic segment spans residues 255 to 257; that stretch reads RSR. The chain crosses the membrane as a helical span at residues 258 to 277; that stretch reads YVLEAAVYTFTMFFSTFYHA. The Extracellular portion of the chain corresponds to 278–292; the sequence is CDQPGIVVFCIMDYD. The chain crosses the membrane as a helical span at residues 293–313; it reads VLQFCDFLGSLMSVWVTVIAM. The Cytoplasmic segment spans residues 314–315; that stretch reads AR. The helical transmembrane segment at 316–336 threads the bilayer; the sequence is LQPVVKQVLYLLGAMLLSMAL. Topologically, residues 337–342 are extracellular; the sequence is QLDRHG. The helical transmembrane segment at 343–363 threads the bilayer; it reads LWNLLGPSLFALGILATAWTV. The Cytoplasmic portion of the chain corresponds to 364–379; sequence RSVRRRHCYPPTWRRW. The helical transmembrane segment at 380–400 threads the bilayer; it reads LFYLCPGSLIAGSAVLLYAFV. Over 401 to 405 the chain is Extracellular; sequence ETRDN. The chain crosses the membrane as a helical span at residues 406 to 426; sequence YFYIHSIWHMLIAGSVGFLLP. Over 427 to 472 the chain is Cytoplasmic; sequence PRAKTDHGVPSGARARGCGYQLCINEQEELGLVGPGGATVSSICAS.

This sequence belongs to the TMEM8 family. As to quaternary structure, isoform 2 (via its cytoplasmic part) interacts with EZR. Post-translationally, isoform 2 is N-glycosylated.

The protein localises to the cell membrane. It localises to the cytoplasm. The protein resides in the nucleus. It is found in the mitochondrion. Its subcellular location is the endoplasmic reticulum. Functionally, may function as a regulator of the EGFR pathway. Probable tumor suppressor which may function in cell growth, proliferation and adhesion. The sequence is that of Transmembrane protein 8B (TMEM8B) from Homo sapiens (Human).